The following is a 101-amino-acid chain: uncharacterized protein (101 aa).

The next 2 membrane-spanning stretches (helical) occupy residues 3-23 and 68-88; these read IIGS…AIIF and VIVL…IIVI.

The protein resides in the cell membrane. This is an uncharacterized protein from Ureaplasma parvum serovar 3 (strain ATCC 700970).